The chain runs to 123 residues: UPF0102 protein CLJ_B2665 (123 aa).

It belongs to the UPF0102 family.

The sequence is that of UPF0102 protein CLJ_B2665 from Clostridium botulinum (strain 657 / Type Ba4).